The following is a 192-amino-acid chain: uncharacterized protein (192 aa).

The Nudix hydrolase domain maps to 29-160; that stretch reads HRQAAVLIPI…PLDIYRRGDS (132 aa). Residues 67–89 carry the Nudix box motif; that stretch reads GAVDDTDTSVIAAALREAEEEVA. Residues glutamate 83 and glutamate 87 each contribute to the Mg(2+) site.

Belongs to the Nudix hydrolase family. PCD1 subfamily. The cofactor is Mn(2+). Mg(2+) serves as cofactor.

Functionally, probably mediates the hydrolysis of some nucleoside diphosphate derivatives. This is an uncharacterized protein from Escherichia fergusonii (strain ATCC 35469 / DSM 13698 / CCUG 18766 / IAM 14443 / JCM 21226 / LMG 7866 / NBRC 102419 / NCTC 12128 / CDC 0568-73).